We begin with the raw amino-acid sequence, 344 residues long: Ketol-acid reductoisomerase (NADP(+)) (344 aa).

One can recognise a KARI N-terminal Rossmann domain in the interval 2 to 181; it reads EKIYYDADIS…GAGRAGILTT (180 aa). Residues 25–28, Arg48, Ser52, and 82–85 each bind NADP(+); these read YGSQ and DERQ. His107 is a catalytic residue. Position 133 (Gly133) interacts with NADP(+). Residues 182–327 enclose the KARI C-terminal knotted domain; sequence TFREETETDL…RKLRSMMPFI (146 aa). Mg(2+) contacts are provided by Asp190, Glu194, Glu226, and Glu230. Ser251 lines the substrate pocket.

This sequence belongs to the ketol-acid reductoisomerase family. The cofactor is Mg(2+).

The enzyme catalyses (2R)-2,3-dihydroxy-3-methylbutanoate + NADP(+) = (2S)-2-acetolactate + NADPH + H(+). It carries out the reaction (2R,3R)-2,3-dihydroxy-3-methylpentanoate + NADP(+) = (S)-2-ethyl-2-hydroxy-3-oxobutanoate + NADPH + H(+). Its pathway is amino-acid biosynthesis; L-isoleucine biosynthesis; L-isoleucine from 2-oxobutanoate: step 2/4. The protein operates within amino-acid biosynthesis; L-valine biosynthesis; L-valine from pyruvate: step 2/4. Involved in the biosynthesis of branched-chain amino acids (BCAA). Catalyzes an alkyl-migration followed by a ketol-acid reduction of (S)-2-acetolactate (S2AL) to yield (R)-2,3-dihydroxy-isovalerate. In the isomerase reaction, S2AL is rearranged via a Mg-dependent methyl migration to produce 3-hydroxy-3-methyl-2-ketobutyrate (HMKB). In the reductase reaction, this 2-ketoacid undergoes a metal-dependent reduction by NADPH to yield (R)-2,3-dihydroxy-isovalerate. The protein is Ketol-acid reductoisomerase (NADP(+)) of Alicyclobacillus acidocaldarius subsp. acidocaldarius (strain ATCC 27009 / DSM 446 / BCRC 14685 / JCM 5260 / KCTC 1825 / NBRC 15652 / NCIMB 11725 / NRRL B-14509 / 104-IA) (Bacillus acidocaldarius).